Consider the following 309-residue polypeptide: uncharacterized protein (309 aa).

It to S.pombe SpAC14C4.04.

This is an uncharacterized protein from Schizosaccharomyces pombe (strain 972 / ATCC 24843) (Fission yeast).